We begin with the raw amino-acid sequence, 77 residues long: Large ribosomal subunit protein eL14 (77 aa).

Belongs to the eukaryotic ribosomal protein eL14 family.

The chain is Large ribosomal subunit protein eL14 from Methanococcus vannielii (strain ATCC 35089 / DSM 1224 / JCM 13029 / OCM 148 / SB).